Consider the following 293-residue polypeptide: Ribonuclease Z (293 aa).

7 residues coordinate Zn(2+): H60, H62, D64, H65, H132, D200, and H256. The active-site Proton acceptor is the D64.

It belongs to the RNase Z family. Homodimer. Zn(2+) serves as cofactor.

The enzyme catalyses Endonucleolytic cleavage of RNA, removing extra 3' nucleotides from tRNA precursor, generating 3' termini of tRNAs. A 3'-hydroxy group is left at the tRNA terminus and a 5'-phosphoryl group is left at the trailer molecule.. Its function is as follows. Zinc phosphodiesterase, which displays some tRNA 3'-processing endonuclease activity. Probably involved in tRNA maturation, by removing a 3'-trailer from precursor tRNA. The sequence is that of Ribonuclease Z from Sulfurisphaera tokodaii (strain DSM 16993 / JCM 10545 / NBRC 100140 / 7) (Sulfolobus tokodaii).